Reading from the N-terminus, the 322-residue chain is N-acetyl-gamma-glutamyl-phosphate reductase (322 aa).

Cys132 is an active-site residue.

The protein belongs to the NAGSA dehydrogenase family. Type 1 subfamily.

The protein resides in the cytoplasm. The enzyme catalyses N-acetyl-L-glutamate 5-semialdehyde + phosphate + NADP(+) = N-acetyl-L-glutamyl 5-phosphate + NADPH + H(+). The protein operates within amino-acid biosynthesis; L-arginine biosynthesis; N(2)-acetyl-L-ornithine from L-glutamate: step 3/4. Its function is as follows. Catalyzes the NADPH-dependent reduction of N-acetyl-5-glutamyl phosphate to yield N-acetyl-L-glutamate 5-semialdehyde. In Bacteroides fragilis (strain YCH46), this protein is N-acetyl-gamma-glutamyl-phosphate reductase.